The chain runs to 203 residues: Dephospho-CoA kinase (203 aa).

Residues 3-202 (KIGLTGSIGM…MRIAKGDFRN (200 aa)) enclose the DPCK domain. 11–16 (GMGKST) contacts ATP.

This sequence belongs to the CoaE family.

Its subcellular location is the cytoplasm. It catalyses the reaction 3'-dephospho-CoA + ATP = ADP + CoA + H(+). The protein operates within cofactor biosynthesis; coenzyme A biosynthesis; CoA from (R)-pantothenate: step 5/5. Catalyzes the phosphorylation of the 3'-hydroxyl group of dephosphocoenzyme A to form coenzyme A. The chain is Dephospho-CoA kinase from Rhizobium etli (strain ATCC 51251 / DSM 11541 / JCM 21823 / NBRC 15573 / CFN 42).